The following is a 399-amino-acid chain: S-adenosylmethionine synthase (399 aa).

Histidine 17 lines the ATP pocket. Aspartate 19 provides a ligand contact to Mg(2+). Glutamate 45 provides a ligand contact to K(+). 2 residues coordinate L-methionine: glutamate 58 and glutamine 101. Positions 101-111 (QSPDIAQGVDE) are flexible loop. ATP contacts are provided by residues 177–179 (DAK), 244–245 (RF), aspartate 253, 259–260 (RK), alanine 276, and lysine 280. Aspartate 253 is an L-methionine binding site. Position 284 (lysine 284) interacts with L-methionine.

It belongs to the AdoMet synthase family. As to quaternary structure, homotetramer; dimer of dimers. The cofactor is Mg(2+). Requires K(+) as cofactor.

It localises to the cytoplasm. The catalysed reaction is L-methionine + ATP + H2O = S-adenosyl-L-methionine + phosphate + diphosphate. It functions in the pathway amino-acid biosynthesis; S-adenosyl-L-methionine biosynthesis; S-adenosyl-L-methionine from L-methionine: step 1/1. Catalyzes the formation of S-adenosylmethionine (AdoMet) from methionine and ATP. The overall synthetic reaction is composed of two sequential steps, AdoMet formation and the subsequent tripolyphosphate hydrolysis which occurs prior to release of AdoMet from the enzyme. The polypeptide is S-adenosylmethionine synthase (Listeria innocua serovar 6a (strain ATCC BAA-680 / CLIP 11262)).